Here is a 237-residue protein sequence, read N- to C-terminus: Ly6/PLAUR domain-containing protein 8 (237 aa).

Residues 1–19 form the signal peptide; that stretch reads MKGILVAGITAVLVAAVES. N-linked (GlcNAc...) asparagine glycans are attached at residues Asn-45, Asn-73, Asn-107, Asn-118, Asn-132, Asn-172, Asn-175, and Asn-185. Residues 125–176 enclose the UPAR/Ly6 domain; the sequence is CPACYESNGTSCHGKPWKCYEEEQCVFLVAELKNDIESKSLVLKGCSNVSNA. Asn-215 is lipidated: GPI-anchor amidated asparagine. Residues 216-237 constitute a propeptide, removed in mature form; it reads VGSKASLYLLALASLLLRGLLP.

The protein belongs to the CNF-like-inhibitor family. Highly N-glycosylated. Not O-glycosylated. Post-translationally, GPI-anchored. The GPI-anchor is cleaved, leading to secretion into the colonic lumen. In terms of tissue distribution, expressed in the large intestine. Preferentially expressed on the epithelial layer exposed to the lumen (at protein level).

The protein resides in the cell membrane. It is found in the secreted. Functionally, secreted protein specifically required to prevent invasion of Gram-negative bacteria in the inner mucus layer of the colon epithelium, a portion of the large intestine which is free of commensal microbiota. Prevents invasion of flagellated microbiota by binding to the flagellum of bacteria, such as P.mirabilis, thereby inhibiting bacterial motility in the intestinal lumen. Segregation of intestinal bacteria and epithelial cells in the colon is required to preserve intestinal homeostasis. This Homo sapiens (Human) protein is Ly6/PLAUR domain-containing protein 8.